A 510-amino-acid polypeptide reads, in one-letter code: ATP-dependent zinc metalloprotease FtsH 2 (510 aa).

Residues 1 to 4 lie on the Cytoplasmic side of the membrane; it reads MKKN. The helical transmembrane segment at 5–25 threads the bilayer; sequence LHIIILALSIFINLLFIYIFI. The Extracellular portion of the chain corresponds to 26–31; the sequence is SEVKPN. The chain crosses the membrane as a helical span at residues 32-52; sequence LNLNLSFILTAAVIVVTYLLF. Over 53-510 the chain is Cytoplasmic; sequence KNKFSELMPV…LWEEENTLCV (458 aa). 124–131 provides a ligand contact to ATP; it reads GPPGTGKT. His343 is a Zn(2+) binding site. Glu344 is a catalytic residue. The Zn(2+) site is built by His347 and Asp418.

The protein in the central section; belongs to the AAA ATPase family. In the C-terminal section; belongs to the peptidase M41 family. In terms of assembly, homohexamer. The cofactor is Zn(2+).

Its subcellular location is the cell membrane. In terms of biological role, acts as a processive, ATP-dependent zinc metallopeptidase for both cytoplasmic and membrane proteins. Plays a role in the quality control of integral membrane proteins. In Thermoanaerobacter sp. (strain X514), this protein is ATP-dependent zinc metalloprotease FtsH 2.